Consider the following 2804-residue polypeptide: Nipped-B-like protein (2804 aa).

Composition is skewed to polar residues over residues 128–173 (LSQN…QNSP) and 191–208 (HPSS…SVSS). A disordered region spans residues 128–340 (LSQNSMHSSP…LGKDEKEQSE (213 aa)). Phosphoserine is present on residues S150 and S162. Positions 234 to 249 (HHADNPRHGSSEDYLH) are enriched in basic and acidic residues. Phosphoserine is present on residues S243, S256, S274, S280, S284, S301, S306, and S318. Positions 331–340 (LGKDEKEQSE) are enriched in basic and acidic residues. S350 is modified (phosphoserine). A compositionally biased stretch (basic and acidic residues) spans 482–500 (RESAIERERFSKEVQDKDK). The segment at 482 to 946 (RESAIERERF…NKAEFPSYLL (465 aa)) is disordered. Residues 523–534 (PASQETGSTGNG) are compositionally biased toward polar residues. Composition is skewed to basic and acidic residues over residues 562-572 (DSIKKPEEIKQ), 593-663 (PENH…ECKQ), 672-685 (KQNE…KPND), and 694-939 (ETTK…DNKA). T713 and T746 each carry phosphothreonine. S912 is modified (phosphoserine). The PxVxL motif motif lies at 996–1009 (NKGAKPVVVLQKLS). Disordered regions lie at residues 1017–1047 (IKDR…DQSV) and 1060–1191 (ESTM…LTPE). N6-acetyllysine is present on K1082. Phosphoserine is present on residues S1089, S1090, and S1096. Residues 1089-1100 (SSDEDNDSDEAF) are compositionally biased toward acidic residues. The span at 1109–1139 (KDDDKAWEYEERDRRSSGDHRRSGHSHEGRR) shows a compositional bias: basic and acidic residues. A phosphoserine mark is found at S1150, S1152, and S1154. Y1159 bears the Phosphotyrosine mark. S1160 is modified (phosphoserine). Positions 1171–1182 (KMKKKEKQKKRK) are enriched in basic residues. A Phosphothreonine modification is found at T1189. S1197 carries the phosphoserine modification. A disordered region spans residues 1691 to 1710 (AMKSQKDEESSEGTHHAKEI). HEAT repeat units lie at residues 1767-1805 (AQSF…VDPS), 1843-1881 (PQLA…EQPT), 1945-1984 (YDWF…HILK), 2227-2267 (VNLK…LKEM), and 2313-2351 (LIHP…KYAG). Residues 2473 to 2489 (VKDKRKERKSSPSKENE) are compositionally biased toward basic and acidic residues. Disordered stretches follow at residues 2473 to 2520 (VKDK…DDIN) and 2651 to 2696 (TSLL…DSTE). Phosphoserine is present on residues S2493, S2509, S2511, S2513, S2515, S2652, and S2658. The segment covering 2510–2519 (DSDSDSEDDI) has biased composition (acidic residues). T2667 bears the Phosphothreonine mark. Position 2672 is a phosphoserine (S2672).

Belongs to the SCC2/Nipped-B family. Heterodimerizes with MAU2/SCC4 to form the cohesin loading complex. The NIPBL-MAU2 heterodimer interacts with the cohesin complex composed of SMC1A/B and SMC3 heterodimer, RAD21 and STAG1/SA1. NIPBL directly contacts all members of the complex, RAD21, SMC1A/B, SMC3 and STAG1. Interacts directly (via PxVxL motif) with CBX5. Interacts with ZNF609 (via N-terminus). Interacts with the multiprotein complex Integrator. Interacts (via PxVxL motif) with CBX3. Interacts with BRD4. As to expression, widely expressed. Highly expressed in heart, skeletal muscle, fetal and adult liver, fetal and adult kidney. Expressed at intermediates level in thymus, placenta, peripheral leukocyte and small intestine. Weakly or not expressed in brain, colon, spleen and lung.

The protein localises to the nucleus. Its subcellular location is the chromosome. Plays an important role in the loading of the cohesin complex on to DNA. Forms a heterodimeric complex (also known as cohesin loading complex) with MAU2/SCC4 which mediates the loading of the cohesin complex onto chromatin. Plays a role in cohesin loading at sites of DNA damage. Its recruitment to double-strand breaks (DSBs) sites occurs in a CBX3-, RNF8- and RNF168-dependent manner whereas its recruitment to UV irradiation-induced DNA damage sites occurs in a ATM-, ATR-, RNF8- and RNF168-dependent manner. Along with ZNF609, promotes cortical neuron migration during brain development by regulating the transcription of crucial genes in this process. Preferentially binds promoters containing paused RNA polymerase II. Up-regulates the expression of SEMA3A, NRP1, PLXND1 and GABBR2 genes, among others. The polypeptide is Nipped-B-like protein (NIPBL) (Homo sapiens (Human)).